A 275-amino-acid chain; its full sequence is Large ribosomal subunit protein uL2 (275 aa).

The segment at 223–275 (VAMNPVDHPHGGGEGRTSGGRHPVSPWGQPTKGYKTRSNKRTDKYIVRRRNKK) is disordered.

Belongs to the universal ribosomal protein uL2 family. In terms of assembly, part of the 50S ribosomal subunit. Forms a bridge to the 30S subunit in the 70S ribosome.

One of the primary rRNA binding proteins. Required for association of the 30S and 50S subunits to form the 70S ribosome, for tRNA binding and peptide bond formation. It has been suggested to have peptidyltransferase activity; this is somewhat controversial. Makes several contacts with the 16S rRNA in the 70S ribosome. This is Large ribosomal subunit protein uL2 from Shewanella piezotolerans (strain WP3 / JCM 13877).